The chain runs to 115 residues: MSTTIEKIQRQIAENPILLYMKGSPKLPSCGFSAQAVQALAACGERFAYVDILQNPDIRAELPKYANWPTFPQLWVDGELVGGCDIVIEMYQRGELQQLIKETAAKYKSEEPDAE.

The 103-residue stretch at isoleucine 5–tyrosine 107 folds into the Glutaredoxin domain. Lysine 22 provides a ligand contact to glutathione. Cysteine 30 is a binding site for [2Fe-2S] cluster. Glutathione-binding positions include arginine 59, phenylalanine 71, and cysteine 84–aspartate 85.

Belongs to the glutaredoxin family. Monothiol subfamily. Homodimer.

The protein resides in the cytoplasm. Functionally, monothiol glutaredoxin involved in the biogenesis of iron-sulfur clusters. The polypeptide is Glutaredoxin 4 (grxD) (Shigella flexneri).